The primary structure comprises 61 residues: Insect toxin LqhIT5 (61 aa).

The LCN-type CS-alpha/beta domain maps to 1-61 (DGYIRGGDGC…EWKYETNTCG (61 aa)). Intrachain disulfides connect Cys10–Cys60, Cys14–Cys35, Cys21–Cys42, and Cys25–Cys44.

This sequence belongs to the long (4 C-C) scorpion toxin superfamily. Sodium channel inhibitor family. Beta subfamily. As to expression, expressed by the venom gland.

It is found in the secreted. Excitatory insect beta-toxins induce a spastic paralysis. They bind voltage-independently at site-4 of sodium channels (Nav) and shift the voltage of activation toward more negative potentials thereby affecting sodium channel activation and promoting spontaneous and repetitive firing. This toxin is active only on insects. It operates by inducing a fast contraction paralysis without depressant activity. It is more similar to the excitatory toxins in its mode of action and the depressant toxins in its primary structure. In Leiurus hebraeus (Hebrew deathstalker scorpion), this protein is Insect toxin LqhIT5.